A 96-amino-acid polypeptide reads, in one-letter code: Large ribosomal subunit protein eL14 (96 aa).

It belongs to the eukaryotic ribosomal protein eL14 family.

The protein is Large ribosomal subunit protein eL14 of Sulfolobus acidocaldarius (strain ATCC 33909 / DSM 639 / JCM 8929 / NBRC 15157 / NCIMB 11770).